We begin with the raw amino-acid sequence, 123 residues long: Acidic phospholipase A2 (123 aa).

7 cysteine pairs are disulfide-bonded: Cys-26–Cys-116, Cys-28–Cys-44, Cys-43–Cys-95, Cys-49–Cys-123, Cys-50–Cys-88, Cys-57–Cys-81, and Cys-75–Cys-86. The Ca(2+) site is built by Tyr-27, Gly-29, and Gly-31. His-47 is an active-site residue. Asp-48 contacts Ca(2+). The active site involves Asp-89.

It belongs to the phospholipase A2 family. Group II subfamily. D49 sub-subfamily. Homodimer. Requires Ca(2+) as cofactor. As to expression, expressed by the venom gland.

It localises to the secreted. The catalysed reaction is a 1,2-diacyl-sn-glycero-3-phosphocholine + H2O = a 1-acyl-sn-glycero-3-phosphocholine + a fatty acid + H(+). Snake venom phospholipase A2 (PLA2) that inhibits ADP-induced platelet aggregation. PLA2 catalyzes the calcium-dependent hydrolysis of the 2-acyl groups in 3-sn-phosphoglycerides. The chain is Acidic phospholipase A2 from Deinagkistrodon acutus (Hundred-pace snake).